The primary structure comprises 739 residues: Double-strand break repair protein mus-23 (739 aa).

The Mn(2+) site is built by aspartate 16, histidine 18, aspartate 56, and asparagine 123. Histidine 124 acts as the Proton donor in catalysis. Mn(2+)-binding residues include histidine 212, histidine 240, and histidine 242. Residues 516 to 739 (FDAGQHKQAQ…KPGLLARRLG (224 aa)) form a disordered region. The span at 523–532 (QAQRTKRFKR) shows a compositional bias: basic residues. Over residues 559 to 568 (VEPKGNDRPT) the composition is skewed to basic and acidic residues. Low complexity predominate over residues 599–636 (KRGAAAKTTAAAKKAAPGKKAAPAKKAAPAKKAAPAKK). Residues 637–646 (APARGRKKKT) are compositionally biased toward basic residues. The segment covering 650–686 (DSDEEEEEDYPEDDDEEEEEADEEEEDVIMEDDEEDP) has biased composition (acidic residues). Over residues 694–722 (KATSRVASTRASARATPVRATPARATQAR) the composition is skewed to low complexity.

Belongs to the MRE11/RAD32 family. Component of the MRN complex composed of two heterodimers RAD50 and MRE11 associated with a single NBS1. Mn(2+) is required as a cofactor.

The protein resides in the nucleus. It is found in the chromosome. The protein localises to the telomere. Functionally, core component of the MRN complex, which plays a central role in double-strand break (DSB) repair, DNA recombination, maintenance of telomere integrity and meiosis. The MRN complex is involved in the repair of DNA double-strand breaks (DSBs) via homologous recombination (HR), an error-free mechanism which primarily occurs during S and G2 phases. The complex (1) mediates the end resection of damaged DNA, which generates proper single-stranded DNA, a key initial steps in HR, and is (2) required for the recruitment of other repair factors and efficient activation of ATM and ATR upon DNA damage. Within the MRN complex, MRE11 possesses both single-strand endonuclease activity and double-strand-specific 3'-5' exonuclease activity. MRE11 first endonucleolytically cleaves the 5' strand at DNA DSB ends to prevent non-homologous end joining (NHEJ) and licence HR. It then generates a single-stranded DNA gap via 3' to 5' exonucleolytic degradation, which is required for single-strand invasion and recombination. The MRN complex is also required for the processing of R-loops. The polypeptide is Double-strand break repair protein mus-23 (mus-23) (Neurospora crassa (strain ATCC 24698 / 74-OR23-1A / CBS 708.71 / DSM 1257 / FGSC 987)).